The sequence spans 325 residues: Apoptosis-enhancing nuclease (325 aa).

The Nucleolar localization signal signature appears at 27–35 (RKRHKRRSR). The interval 85–105 (RAGSGSAPCSRRPAPGKASGP) is disordered. The Exonuclease domain maps to 110–266 (CVAIDCEMVG…EDATTAMELY (157 aa)). The short motif at 165-188 (RQHMRKAVPFQVAQKEILKLLKGK) is the Nuclear localization signal element. The disordered stretch occupies residues 281 to 325 (LWTCPEDREPDSSTDMEQYMEDQYWPDDLAHGSRGGAREAQDRRN). The segment covering 308-325 (DLAHGSRGGAREAQDRRN) has biased composition (basic and acidic residues).

The protein localises to the nucleus. The protein resides in the nucleolus. Its function is as follows. Exonuclease with activity against single- and double-stranded DNA and RNA. Mediates p53-induced apoptosis. When induced by p53 following DNA damage, digests double-stranded DNA to form single-stranded DNA and amplifies DNA damage signals, leading to enhancement of apoptosis. The sequence is that of Apoptosis-enhancing nuclease (AEN) from Homo sapiens (Human).